The sequence spans 351 residues: Probable protein phosphatase 2C 41 (351 aa).

The PPM-type phosphatase domain occupies 62 to 348 (FTSICSNRGE…DDISVLCLFF (287 aa)). Mn(2+) is bound by residues D98, G99, D293, and D339.

The protein belongs to the PP2C family. It depends on Mg(2+) as a cofactor. Mn(2+) serves as cofactor.

The enzyme catalyses O-phospho-L-seryl-[protein] + H2O = L-seryl-[protein] + phosphate. It catalyses the reaction O-phospho-L-threonyl-[protein] + H2O = L-threonyl-[protein] + phosphate. This chain is Probable protein phosphatase 2C 41, found in Arabidopsis thaliana (Mouse-ear cress).